Consider the following 417-residue polypeptide: Mitochondrial tRNA-specific 2-thiouridylase 1 (417 aa).

ATP contacts are provided by residues 32 to 39 (AMSSGVDS) and Met-58. Positions 122–124 (NPD) are interaction with target base in tRNA. Residue Cys-127 is the Nucleophile of the active site. A disulfide bridge connects residues Cys-127 and Cys-229. Gly-154 contacts ATP. The interaction with tRNA stretch occupies residues 179–181 (KDQ). Residue Cys-229 is the Cysteine persulfide intermediate of the active site. The interaction with tRNA stretch occupies residues 354–355 (RS).

This sequence belongs to the MnmA/TRMU family.

The protein resides in the mitochondrion. It carries out the reaction 5-taurinomethyluridine(34) in tRNA + S-sulfanyl-L-cysteinyl-[protein] + AH2 + ATP = 5-taurinomethyl-2-thiouridine(34) in tRNA + L-cysteinyl-[protein] + A + AMP + diphosphate + H(+). Functionally, catalyzes the 2-thiolation of uridine at the wobble position (U34) of mitochondrial tRNA(Lys), tRNA(Glu) and tRNA(Gln). Required for the formation of 5-taurinomethyl-2-thiouridine (tm5s2U) of mitochondrial tRNA(Lys), tRNA(Glu), and tRNA(Gln) at the wobble position. ATP is required to activate the C2 atom of the wobble base. This is Mitochondrial tRNA-specific 2-thiouridylase 1 (SLM3) from Saccharomyces cerevisiae (strain ATCC 204508 / S288c) (Baker's yeast).